We begin with the raw amino-acid sequence, 311 residues long: Mediator of RNA polymerase II transcription subunit 27 (311 aa).

The residue at position 132 (S132) is a Phosphoserine. At K134 the chain carries N6-methyllysine.

Belongs to the Mediator complex subunit 27 family. As to quaternary structure, component of the Mediator complex, which is composed of MED1, MED4, MED6, MED7, MED8, MED9, MED10, MED11, MED12, MED13, MED13L, MED14, MED15, MED16, MED17, MED18, MED19, MED20, MED21, MED22, MED23, MED24, MED25, MED26, MED27, MED29, MED30, MED31, CCNC, CDK8 and CDC2L6/CDK11. The MED12, MED13, CCNC and CDK8 subunits form a distinct module termed the CDK8 module. Mediator containing the CDK8 module is less active than Mediator lacking this module in supporting transcriptional activation. Individual preparations of the Mediator complex lacking one or more distinct subunits have been variously termed ARC, CRSP, DRIP, PC2, SMCC and TRAP.

The protein localises to the nucleus. Component of the Mediator complex, a coactivator involved in the regulated transcription of nearly all RNA polymerase II-dependent genes. Mediator functions as a bridge to convey information from gene-specific regulatory proteins to the basal RNA polymerase II transcription machinery. Mediator is recruited to promoters by direct interactions with regulatory proteins and serves as a scaffold for the assembly of a functional preinitiation complex with RNA polymerase II and the general transcription factors. In Sus scrofa (Pig), this protein is Mediator of RNA polymerase II transcription subunit 27 (MED27).